The sequence spans 633 residues: Kelch-like protein diablo (633 aa).

The interval 1–62 is disordered; sequence MGDLPGSTGG…ARLSHTSEKH (62 aa). Positions 7-25 are enriched in gly residues; the sequence is STGGGGGVGGGGNGGGGPT. Low complexity predominate over residues 26–45; that stretch reads IAGTNGNSTTGPGSSTGSTG. In terms of domain architecture, BTB spans 80–147; that stretch reads CDVVLNVGGR…CYTAHIIVEE (68 aa). Residues 182–284 enclose the BACK domain; that stretch reads CLGIRAFADT…SPKFLVGTVG (103 aa). Kelch repeat units follow at residues 331-377, 379-425, 426-472, 474-519, 521-566, and 567-613; these read VLFA…VLND, LYAV…VLDG, FLYA…VLGG, LYAI…VFNN, IYAV…VVNG, and QLYA…VMRA.

The protein operates within protein modification; protein ubiquitination. Functionally, probable substrate-specific adapter of an E3 ubiquitin-protein ligase complex which mediates the ubiquitination and subsequent proteasomal degradation of target proteins. May have a role in synapse differentiation and growth. The polypeptide is Kelch-like protein diablo (Drosophila ananassae (Fruit fly)).